Reading from the N-terminus, the 138-residue chain is Ergosterol biosynthetic protein 28 (138 aa).

Residues 17–33 (LPYWLLFISVVSIFNSV) traverse the membrane as a helical segment. N-linked (GlcNAc...) asparagine glycosylation occurs at N40. 3 helical membrane passes run 56–75 (LSAR…RFYG), 87–107 (LTQF…LYFG), and 114–131 (GLSG…WMYL).

It belongs to the ERG28 family. In terms of assembly, heterotetramer of ERG25, ERG26, ERG27 and ERG28. ERG28 acts as a scaffold to tether ERG27 and other 4,4-demethylation-related enzymes, forming a demethylation enzyme complex, in the endoplasmic reticulum. Interacts with ERG25, ERG26 and ERG27. Also interacts with ERG1, ERG3, ERG5, ERG6 and ERG11.

The protein resides in the endoplasmic reticulum membrane. Its function is as follows. Part of the third module of ergosterol biosynthesis pathway that includes the late steps of the pathway. ERG28 has a role as a scaffold to help anchor the catalytic components of the C-4 demethylation complex ERG25, ERG26 and ERG27 to the endoplasmic reticulum. The third module or late pathway involves the ergosterol synthesis itself through consecutive reactions that mainly occur in the endoplasmic reticulum (ER) membrane. Firstly, the squalene synthase ERG9 catalyzes the condensation of 2 farnesyl pyrophosphate moieties to form squalene, which is the precursor of all steroids. Squalene synthase is crucial for balancing the incorporation of farnesyl diphosphate (FPP) into sterol and nonsterol isoprene synthesis. Secondly, the squalene epoxidase ERG1 catalyzes the stereospecific oxidation of squalene to (S)-2,3-epoxysqualene, which is considered to be a rate-limiting enzyme in steroid biosynthesis. Then, the lanosterol synthase ERG7 catalyzes the cyclization of (S)-2,3 oxidosqualene to lanosterol, a reaction that forms the sterol core. In the next steps, lanosterol is transformed to zymosterol through a complex process involving various demethylation, reduction and desaturation reactions. The lanosterol 14-alpha-demethylase ERG11 (also known as CYP51) catalyzes C14-demethylation of lanosterol to produce 4,4'-dimethyl cholesta-8,14,24-triene-3-beta-ol, which is critical for ergosterol biosynthesis. The C-14 reductase ERG24 reduces the C14=C15 double bond of 4,4-dimethyl-cholesta-8,14,24-trienol to produce 4,4-dimethyl-cholesta-8,24-dienol. 4,4-dimethyl-cholesta-8,24-dienol is substrate of the C-4 demethylation complex ERG25-ERG26-ERG27 in which ERG25 catalyzes the three-step monooxygenation required for the demethylation of 4,4-dimethyl and 4alpha-methylsterols, ERG26 catalyzes the oxidative decarboxylation that results in a reduction of the 3-beta-hydroxy group at the C-3 carbon to an oxo group, and ERG27 is responsible for the reduction of the keto group on the C-3. ERG28 has a role as a scaffold to help anchor ERG25, ERG26 and ERG27 to the endoplasmic reticulum and ERG29 regulates the activity of the iron-containing C4-methylsterol oxidase ERG25. Then, the sterol 24-C-methyltransferase ERG6 catalyzes the methyl transfer from S-adenosyl-methionine to the C-24 of zymosterol to form fecosterol. The C-8 sterol isomerase ERG2 catalyzes the reaction which results in unsaturation at C-7 in the B ring of sterols and thus converts fecosterol to episterol. The sterol-C5-desaturase ERG3 then catalyzes the introduction of a C-5 double bond in the B ring to produce 5-dehydroepisterol. The C-22 sterol desaturase ERG5 further converts 5-dehydroepisterol into ergosta-5,7,22,24(28)-tetraen-3beta-ol by forming the C-22(23) double bond in the sterol side chain. Finally, ergosta-5,7,22,24(28)-tetraen-3beta-ol is substrate of the C-24(28) sterol reductase ERG4 to produce ergosterol. The chain is Ergosterol biosynthetic protein 28 from Candida albicans (strain SC5314 / ATCC MYA-2876) (Yeast).